A 327-amino-acid polypeptide reads, in one-letter code: Cytochrome c biogenesis protein CcsA (327 aa).

A run of 8 helical transmembrane segments spans residues 13 to 33 (ISFS…LVNL), 46 to 66 (GIII…IYSG), 73 to 93 (LYES…VSYF), 101 to 121 (LNAI…SGLL), 145 to 165 (MILG…LLVI), 233 to 253 (IISL…VWAN), 262 to 282 (WDPK…YLHI), and 294 to 314 (AIVA…VNLL).

It belongs to the CcmF/CycK/Ccl1/NrfE/CcsA family. In terms of assembly, may interact with Ccs1.

The protein resides in the plastid. Its subcellular location is the chloroplast thylakoid membrane. In terms of biological role, required during biogenesis of c-type cytochromes (cytochrome c6 and cytochrome f) at the step of heme attachment. The polypeptide is Cytochrome c biogenesis protein CcsA (Lobularia maritima (Sweet alyssum)).